Consider the following 1132-residue polypeptide: APC membrane recruitment protein 1 (1132 aa).

M1 carries the post-translational modification N-acetylmethionine. The span at 1-21 shows a compositional bias: polar residues; sequence MESQQDEAVQTKGASTSSDAQ. Disordered regions lie at residues 1–256, 268–301, 338–423, 469–505, 674–699, 736–770, 924–949, and 1038–1132; these read MESQ…ACKN, FMQP…NPPN, SMTD…GEEN, GLGE…DSGE, TSGG…EPDW, MQEA…GNAT, ELQA…DSPL, and SQAS…NLAK. Basic and acidic residues predominate over residues 24–35; sequence GAEKGAKNKTTE. The span at 121 to 133 shows a compositional bias: low complexity; it reads SKSSAQFPSSQSA. 3 stretches are compositionally biased toward basic and acidic residues: residues 195 to 208, 218 to 229, and 281 to 290; these read KELE…HEHV, EIFRDTRKENAK, and EEPHTSETEG. Positions 372-423 are enriched in acidic residues; it reads ALPDDDDNDDEEEEEEEEEEEEEEEEEEEEEEEEEEEELLEDEEEVKDGEEN. Polar residues-rich tracts occupy residues 475–486 and 677–696; these read TPQSDQQESAPN and GSQT…SSSE. Acidic residues-rich tracts occupy residues 756–765 and 931–941; these read EEPEEEEEEK and DSDEEGEEEEG. 2 stretches are compositionally biased toward polar residues: residues 1059-1072 and 1115-1132; these read SCSS…QSQA and ASLS…NLAK.

This sequence belongs to the Amer family. Interacts with CTNNB1, AXIN1, LRP6, KEAP1, APC and BTRC. Interacts with SCF (SKP1-CUL1-F-box protein) E3 ubiquitin-protein ligase complexes containing BTRC and/or FBXW11. Identified in the beta-catenin destruction complex containing CTNNB1, APC, AXIN1 and AXIN2. Interacts with WT1. Expressed in kidney.

It is found in the cytoplasm. The protein localises to the cell membrane. It localises to the nucleus. In terms of biological role, regulator of the canonical Wnt signaling pathway. Acts by specifically binding phosphatidylinositol 4,5-bisphosphate (PtdIns(4,5)P2), translocating to the cell membrane and interacting with key regulators of the canonical Wnt signaling pathway, such as components of the beta-catenin destruction complex. Acts both as a positive and negative regulator of the Wnt signaling pathway, depending on the context: acts as a positive regulator by promoting LRP6 phosphorylation. Also acts as a negative regulator by acting as a scaffold protein for the beta-catenin destruction complex and promoting stabilization of Axin at the cell membrane. Promotes CTNNB1 ubiquitination and degradation. Involved in kidney development. The sequence is that of APC membrane recruitment protein 1 (Amer1) from Mus musculus (Mouse).